The chain runs to 83 residues: MKASMFLALAGLALLFVVCYASESEEKEFPIELLSKIFAVDVFKGEERGCKGFGDSCTPGKNECCPNYACSSKHKWCKVYLGK.

A signal peptide spans 1-21; it reads MKASMFLALAGLALLFVVCYA. The propeptide occupies 22-48; that stretch reads SESEEKEFPIELLSKIFAVDVFKGEER. 3 cysteine pairs are disulfide-bonded: Cys50–Cys65, Cys57–Cys70, and Cys64–Cys77. A Leucine amide modification is found at Leu81.

Belongs to the neurotoxin 10 (Hwtx-1) family. 15 (Hntx-3) subfamily. In terms of assembly, monomer. Expressed by the venom gland.

Its subcellular location is the secreted. Selective antagonist of neuronal tetrodotoxin (TTX)-sensitive voltage-gated sodium channels (IC(50)=1270 nM on Nav1.1/SCN1A, 270 nM on Nav1.2/SCN2A, 491 nM on Nav1.3/SCN3A and 232 nM on Nav1.7/SCN9A). This toxin suppress Nav1.7 current amplitude without significantly altering the activation, inactivation, and repriming kinetics. Short extreme depolarizations partially activate the toxin-bound channel, indicating voltage-dependent inhibition of this toxin. This toxin increases the deactivation of the Nav1.7 current after extreme depolarizations. The toxin-Nav1.7 complex is gradually dissociated upon prolonged strong depolarizations in a voltage-dependent manner, and the unbound toxin rebinds to Nav1.7 after a long repolarization. Moreover, analysis of chimeric channels showed that the DIIS3-S4 linker is critical for toxin binding to Nav1.7. These data are consistent with this toxin interacting with Nav1.7 site 4 and trapping the domain II voltage sensor in the closed state. The chain is Hainantoxin-III 9 from Cyriopagopus hainanus (Chinese bird spider).